The primary structure comprises 412 residues: Short-chain specific acyl-CoA dehydrogenase, mitochondrial (412 aa).

A mitochondrion-targeting transit peptide spans 1–24 (MAAALLARASGPARRALCPRAWRQ). Threonine 27 is modified (phosphothreonine). Lysine 51 is subject to N6-acetyllysine; alternate. Position 51 is an N6-succinyllysine; alternate (lysine 51). Lysine 72 carries the N6-acetyllysine modification. An N6-acetyllysine; alternate modification is found at lysine 129. An N6-succinyllysine; alternate modification is found at lysine 129. FAD contacts are provided by residues 152-161 (FALSEPGNGS) and 185-187 (WIT). Residue serine 161 participates in substrate binding. Residue lysine 208 is modified to N6-acetyllysine. Lysine 262 carries the post-translational modification N6-acetyllysine; alternate. Residue lysine 262 is modified to N6-succinyllysine; alternate. 269-272 (DMGR) provides a ligand contact to substrate. Arginine 297 contacts FAD. Lysine 306 is subject to N6-acetyllysine; alternate. Lysine 306 carries the N6-succinyllysine; alternate modification. FAD contacts are provided by residues glutamine 308 and 365–369 (QILGG). Catalysis depends on glutamate 392, which acts as the Proton acceptor. Glycine 393 serves as a coordination point for substrate. 394–396 (TSE) contributes to the FAD binding site.

It belongs to the acyl-CoA dehydrogenase family. As to quaternary structure, homotetramer. It depends on FAD as a cofactor.

The protein resides in the mitochondrion matrix. The catalysed reaction is a short-chain 2,3-saturated fatty acyl-CoA + oxidized [electron-transfer flavoprotein] + H(+) = a short-chain (2E)-enoyl-CoA + reduced [electron-transfer flavoprotein]. The enzyme catalyses butanoyl-CoA + oxidized [electron-transfer flavoprotein] + H(+) = (2E)-butenoyl-CoA + reduced [electron-transfer flavoprotein]. It carries out the reaction pentanoyl-CoA + oxidized [electron-transfer flavoprotein] + H(+) = (2E)-pentenoyl-CoA + reduced [electron-transfer flavoprotein]. It catalyses the reaction hexanoyl-CoA + oxidized [electron-transfer flavoprotein] + H(+) = (2E)-hexenoyl-CoA + reduced [electron-transfer flavoprotein]. The protein operates within lipid metabolism; mitochondrial fatty acid beta-oxidation. Short-chain specific acyl-CoA dehydrogenase is one of the acyl-CoA dehydrogenases that catalyze the first step of mitochondrial fatty acid beta-oxidation, an aerobic process breaking down fatty acids into acetyl-CoA and allowing the production of energy from fats. The first step of fatty acid beta-oxidation consists in the removal of one hydrogen from C-2 and C-3 of the straight-chain fatty acyl-CoA thioester, resulting in the formation of trans-2-enoyl-CoA. Among the different mitochondrial acyl-CoA dehydrogenases, short-chain specific acyl-CoA dehydrogenase acts specifically on acyl-CoAs with saturated 4 to 6 carbons long primary chains. The protein is Short-chain specific acyl-CoA dehydrogenase, mitochondrial (ACADS) of Homo sapiens (Human).